Consider the following 146-residue polypeptide: Cytochrome b5 type B (146 aa).

A propeptide spanning residues 1–11 is cleaved from the precursor; sequence MATPEASGSGE. Ser19 is subject to Phosphoserine. In terms of domain architecture, Cytochrome b5 heme-binding spans 20 to 96; the sequence is VTYYRLEEVA…LKQYYIGDVH (77 aa). Lys30 carries the post-translational modification N6-acetyllysine. The residue at position 33 (Ser33) is a Phosphoserine. Heme-binding residues include His55 and His79. At Ser80 the chain carries Phosphoserine. Residues 119–136 form a helical membrane-spanning segment; it reads WAYWFVPIVGAILIGFLY.

It belongs to the cytochrome b5 family. As to quaternary structure, component of a complex composed of cytochrome b5, NADH-cytochrome b5 reductase (CYB5R3) and MTARC2.

It localises to the mitochondrion outer membrane. Cytochrome b5 is a membrane-bound hemoprotein functioning as an electron carrier for several membrane-bound oxygenases. This chain is Cytochrome b5 type B (Cyb5b), found in Mus musculus (Mouse).